The following is a 129-amino-acid chain: Large ribosomal subunit protein bL12 (129 aa).

Residues 95–123 (MVESTPKSIKEGVSKEDAEEAKKSLEDAG) are compositionally biased toward basic and acidic residues. The tract at residues 95-129 (MVESTPKSIKEGVSKEDAEEAKKSLEDAGGKASLK) is disordered.

The protein belongs to the bacterial ribosomal protein bL12 family. Homodimer. Part of the ribosomal stalk of the 50S ribosomal subunit. Forms a multimeric L10(L12)X complex, where L10 forms an elongated spine to which 2 to 4 L12 dimers bind in a sequential fashion. Binds GTP-bound translation factors.

Its function is as follows. Forms part of the ribosomal stalk which helps the ribosome interact with GTP-bound translation factors. Is thus essential for accurate translation. The chain is Large ribosomal subunit protein bL12 from Acaryochloris marina (strain MBIC 11017).